A 162-amino-acid polypeptide reads, in one-letter code: Class I hydrophobin 3 (162 aa).

Cystine bridges form between C36–C150 and C151–C159.

This sequence belongs to the fungal hydrophobin family. In terms of assembly, self-assembles to form functional amyloid fibrils called rodlets. Self-assembly into fibrillar rodlets occurs spontaneously at hydrophobic:hydrophilic interfaces and the rodlets further associate laterally to form amphipathic monolayers.

It localises to the secreted. Its subcellular location is the cell wall. Aerial growth, conidiation, and dispersal of filamentous fungi in the environment rely upon a capability of their secreting small amphipathic proteins called hydrophobins (HPBs) with low sequence identity. Class I can self-assemble into an outermost layer of rodlet bundles on aerial cell surfaces, conferring cellular hydrophobicity that supports fungal growth, development and dispersal; whereas Class II form highly ordered films at water-air interfaces through intermolecular interactions but contribute nothing to the rodlet structure. The protein is Class I hydrophobin 3 of Coprinopsis cinerea (strain Okayama-7 / 130 / ATCC MYA-4618 / FGSC 9003) (Inky cap fungus).